Consider the following 127-residue polypeptide: Ribonuclease P protein component (127 aa).

This sequence belongs to the RnpA family. Consists of a catalytic RNA component (M1 or rnpB) and a protein subunit.

It carries out the reaction Endonucleolytic cleavage of RNA, removing 5'-extranucleotides from tRNA precursor.. Its function is as follows. RNaseP catalyzes the removal of the 5'-leader sequence from pre-tRNA to produce the mature 5'-terminus. It can also cleave other RNA substrates such as 4.5S RNA. The protein component plays an auxiliary but essential role in vivo by binding to the 5'-leader sequence and broadening the substrate specificity of the ribozyme. The chain is Ribonuclease P protein component from Agrobacterium fabrum (strain C58 / ATCC 33970) (Agrobacterium tumefaciens (strain C58)).